We begin with the raw amino-acid sequence, 874 residues long: Alanine--tRNA ligase (874 aa).

His-562, His-566, Cys-664, and His-668 together coordinate Zn(2+).

Belongs to the class-II aminoacyl-tRNA synthetase family. Requires Zn(2+) as cofactor.

The protein resides in the cytoplasm. The catalysed reaction is tRNA(Ala) + L-alanine + ATP = L-alanyl-tRNA(Ala) + AMP + diphosphate. In terms of biological role, catalyzes the attachment of alanine to tRNA(Ala) in a two-step reaction: alanine is first activated by ATP to form Ala-AMP and then transferred to the acceptor end of tRNA(Ala). Also edits incorrectly charged Ser-tRNA(Ala) and Gly-tRNA(Ala) via its editing domain. In Neisseria gonorrhoeae (strain ATCC 700825 / FA 1090), this protein is Alanine--tRNA ligase.